The chain runs to 510 residues: Maturase K (510 aa).

Belongs to the intron maturase 2 family. MatK subfamily.

The protein localises to the plastid. It localises to the chloroplast. Usually encoded in the trnK tRNA gene intron. Probably assists in splicing its own and other chloroplast group II introns. The chain is Maturase K from Thuja plicata (Western red-cedar).